The sequence spans 517 residues: Acetylcholine receptor subunit delta (517 aa).

A signal peptide spans 1 to 21 (MAGPVPTLGLLAALVVCGSWG). The Extracellular portion of the chain corresponds to 22 to 245 (LNEEQRLIQH…VTFYLIIRRK (224 aa)). 3 N-linked (GlcNAc...) asparagine glycosylation sites follow: asparagine 97, asparagine 164, and asparagine 190. Cysteine 151 and cysteine 165 form a disulfide bridge. 3 consecutive transmembrane segments (helical) span residues 246–270 (PLFY…VFYL), 278–296 (TSVA…LLIS), and 312–333 (FLLF…VLNI). Topologically, residues 334 to 471 (HFRTPSTHVL…WNQVARTVDR (138 aa)) are cytoplasmic. Tyrosine 390 carries the post-translational modification Phosphotyrosine; by Tyr-kinases. Residues 472–490 (LCLFVVTPVMVVGTAWIFL) form a helical membrane-spanning segment.

This sequence belongs to the ligand-gated ion channel (TC 1.A.9) family. Acetylcholine receptor (TC 1.A.9.1) subfamily. Delta/CHRND sub-subfamily. As to quaternary structure, pentamer of two alpha chains, and one each of the beta, delta, and gamma (in immature muscle) or epsilon (in mature muscle) chains. The muscle heteropentamer composed of alpha-1, beta-1, delta, epsilon subunits interacts with the alpha-conotoxin ImII.

Its subcellular location is the postsynaptic cell membrane. It is found in the cell membrane. It catalyses the reaction K(+)(in) = K(+)(out). The enzyme catalyses Na(+)(in) = Na(+)(out). Functionally, after binding acetylcholine, the AChR responds by an extensive change in conformation that affects all subunits and leads to opening of an ion-conducting channel across the plasma membrane. In Rattus norvegicus (Rat), this protein is Acetylcholine receptor subunit delta (Chrnd).